The following is a 225-amino-acid chain: UPF0758 protein XOO0462 (225 aa).

The MPN domain occupies 102–224 (ALSDPPSVGR…PVSLAERGWL (123 aa)). 3 residues coordinate Zn(2+): His173, His175, and Asp186. The short motif at 173–186 (HNHPSGNPEPSEAD) is the JAMM motif element.

This sequence belongs to the UPF0758 family.

This is UPF0758 protein XOO0462 from Xanthomonas oryzae pv. oryzae (strain MAFF 311018).